The primary structure comprises 1400 residues: Macrophage-stimulating protein receptor (1400 aa).

A signal peptide spans Met-1–Gly-24. Over Glu-25–Thr-957 the chain is Extracellular. A Sema domain is found at Arg-31 to Ile-522. Residue Asn-66 is glycosylated (N-linked (GlcNAc...) asparagine). 7 cysteine pairs are disulfide-bonded: Cys-101/Cys-104, Cys-107/Cys-162, Cys-135/Cys-143, Cys-174/Cys-177, Cys-300/Cys-367, Cys-385/Cys-407, and Cys-386/Cys-422. N-linked (GlcNAc...) asparagine glycans are attached at residues Asn-419, Asn-458, and Asn-488. 4 disulfide bridges follow: Cys-527–Cys-545, Cys-533–Cys-567, Cys-536–Cys-552, and Cys-548–Cys-558. IPT/TIG domains lie at Pro-569–Asp-671, Pro-684–Arg-767, and Pro-770–Leu-860. N-linked (GlcNAc...) asparagine glycosylation is found at Asn-654, Asn-720, Asn-841, and Asn-897. Residues Leu-958–Phe-978 form a helical membrane-spanning segment. The Cytoplasmic segment spans residues Ser-979–Thr-1400. Residues Thr-1082–Val-1345 form the Protein kinase domain. Residues Ile-1088–Val-1096, Lys-1114, and Leu-1161–Met-1164 each bind ATP. The active-site Proton acceptor is the Asp-1208. Arg-1212 is a binding site for ATP. Tyr-1238, Tyr-1239, Tyr-1353, and Tyr-1360 each carry phosphotyrosine; by autocatalysis. Residues Thr-1367–Thr-1400 form a disordered region.

The protein belongs to the protein kinase superfamily. Tyr protein kinase family. As to quaternary structure, heterodimer of an alpha chain and a beta chain which are disulfide linked. Binds PLXNB1. Associates with and is negatively regulated by HYAL2. Interacts when phosphorylated with downstream effectors including PIK3R1, PCLG1, GRB2 and GAB1. Interacts with integrin beta1/ITGB1 in a ligand-independent fashion. In terms of processing, proteolytic processing yields the two subunits. Post-translationally, autophosphorylated in response to ligand binding on Tyr-1238 and Tyr-1239 in the kinase domain leading to further phosphorylation of Tyr-1353 and Tyr-1360 in the C-terminal multifunctional docking site. Ubiquitinated. Ubiquitination by CBL regulates the receptor stability and activity through proteasomal degradation. In terms of processing, O-mannosylation of IPT/TIG domains on Thr or Ser residues by TMEM260 is required for protein maturation. O-mannosylated residues are composed of single mannose glycans that are not elongated or modified. As to expression, expressed in colon, skin, lung and bone marrow.

It is found in the membrane. The enzyme catalyses L-tyrosyl-[protein] + ATP = O-phospho-L-tyrosyl-[protein] + ADP + H(+). Its activity is regulated as follows. In its inactive state, the C-terminal tail interacts with the catalytic domain and inhibits the kinase activity. Upon ligand binding, the C-terminal tail is displaced and becomes phosphorylated, thus increasing the kinase activity. Receptor tyrosine kinase that transduces signals from the extracellular matrix into the cytoplasm by binding to MST1 ligand. Regulates many physiological processes including cell survival, migration and differentiation. Ligand binding at the cell surface induces autophosphorylation of RON on its intracellular domain that provides docking sites for downstream signaling molecules. Following activation by ligand, interacts with the PI3-kinase subunit PIK3R1, PLCG1 or the adapter GAB1. Recruitment of these downstream effectors by RON leads to the activation of several signaling cascades including the RAS-ERK, PI3 kinase-AKT, or PLCgamma-PKC. RON signaling activates the wound healing response by promoting epithelial cell migration, proliferation as well as survival at the wound site. Also plays a role in the innate immune response by regulating the migration and phagocytic activity of macrophages. Alternatively, RON can also promote signals such as cell migration and proliferation in response to growth factors other than MST1 ligand. The protein is Macrophage-stimulating protein receptor (MST1R) of Homo sapiens (Human).